A 652-amino-acid chain; its full sequence is ATP-dependent zinc metalloprotease FtsH (652 aa).

Residues 1–11 are Cytoplasmic-facing; sequence MKKQNNGLIKN. Residues 12–32 form a helical membrane-spanning segment; that stretch reads PFLWLLFIFFLVTGFQYFYSG. Over 33-131 the chain is Extracellular; that stretch reads NNSGGSQQIN…EVTVKHESSS (99 aa). A helical membrane pass occupies residues 132–152; the sequence is GIWINLLVSIVPFGILFFFLF. Residues 153–652 lie on the Cytoplasmic side of the membrane; the sequence is SMMGNMGGGN…EVKSKMNDEK (500 aa). Residue 227-234 coordinates ATP; sequence GPPGTGKT. H449 lines the Zn(2+) pocket. E450 is an active-site residue. Zn(2+) contacts are provided by H453 and D525. The interval 628 to 652 is disordered; that stretch reads MPEAVEEESHALSYDEVKSKMNDEK. Residues 634–652 are compositionally biased toward basic and acidic residues; it reads EESHALSYDEVKSKMNDEK.

In the central section; belongs to the AAA ATPase family. The protein in the C-terminal section; belongs to the peptidase M41 family. As to quaternary structure, homohexamer. Requires Zn(2+) as cofactor.

It localises to the cell membrane. Its function is as follows. Acts as a processive, ATP-dependent zinc metallopeptidase for both cytoplasmic and membrane proteins. Plays a role in the quality control of integral membrane proteins. This chain is ATP-dependent zinc metalloprotease FtsH, found in Streptococcus pneumoniae (strain ATCC BAA-255 / R6).